The sequence spans 489 residues: mRNA cleavage and polyadenylation factor CLP1 (489 aa).

ATP-binding positions include E28 and 152–157; that span reads YSGKTT.

Belongs to the Clp1 family. Clp1 subfamily. In terms of assembly, component of a pre-mRNA cleavage factor complex. Interacts directly with PCF11.

It localises to the nucleus. Required for endonucleolytic cleavage during polyadenylation-dependent pre-mRNA 3'-end formation. The protein is mRNA cleavage and polyadenylation factor CLP1 of Candida albicans (strain SC5314 / ATCC MYA-2876) (Yeast).